Consider the following 464-residue polypeptide: tRNA modification GTPase MnmE (464 aa).

Residues Arg25, Glu87, and Lys130 each coordinate (6S)-5-formyl-5,6,7,8-tetrahydrofolate. Positions Gly226–Gly386 constitute a TrmE-type G domain. Asn236 lines the K(+) pocket. GTP-binding positions include Asn236–Ser241, Thr255–Thr261, and Asp280–Gly283. A Mg(2+)-binding site is contributed by Ser240. K(+) contacts are provided by Thr255, Ile257, and Thr260. Thr261 is a binding site for Mg(2+). Residue Lys464 coordinates (6S)-5-formyl-5,6,7,8-tetrahydrofolate.

Belongs to the TRAFAC class TrmE-Era-EngA-EngB-Septin-like GTPase superfamily. TrmE GTPase family. Homodimer. Heterotetramer of two MnmE and two MnmG subunits. K(+) serves as cofactor.

Its subcellular location is the cytoplasm. Its function is as follows. Exhibits a very high intrinsic GTPase hydrolysis rate. Involved in the addition of a carboxymethylaminomethyl (cmnm) group at the wobble position (U34) of certain tRNAs, forming tRNA-cmnm(5)s(2)U34. The sequence is that of tRNA modification GTPase MnmE from Burkholderia lata (strain ATCC 17760 / DSM 23089 / LMG 22485 / NCIMB 9086 / R18194 / 383).